A 275-amino-acid chain; its full sequence is UPF0328 protein ECU05_0050 (275 aa).

Belongs to the UPF0328 family.

This Encephalitozoon cuniculi (strain GB-M1) (Microsporidian parasite) protein is UPF0328 protein ECU05_0050.